Reading from the N-terminus, the 297-residue chain is 4-diphosphocytidyl-2-C-methyl-D-erythritol kinase (297 aa).

Lys14 is a catalytic residue. Position 99-109 (99-109 (PVAAGIGGGSA)) interacts with ATP. Asp141 is an active-site residue.

The protein belongs to the GHMP kinase family. IspE subfamily.

It catalyses the reaction 4-CDP-2-C-methyl-D-erythritol + ATP = 4-CDP-2-C-methyl-D-erythritol 2-phosphate + ADP + H(+). The protein operates within isoprenoid biosynthesis; isopentenyl diphosphate biosynthesis via DXP pathway; isopentenyl diphosphate from 1-deoxy-D-xylulose 5-phosphate: step 3/6. Catalyzes the phosphorylation of the position 2 hydroxy group of 4-diphosphocytidyl-2C-methyl-D-erythritol. This chain is 4-diphosphocytidyl-2-C-methyl-D-erythritol kinase, found in Bradyrhizobium diazoefficiens (strain JCM 10833 / BCRC 13528 / IAM 13628 / NBRC 14792 / USDA 110).